A 600-amino-acid chain; its full sequence is UvrABC system protein C (600 aa).

The GIY-YIG domain maps to 15-92; sequence EKPGCYLMKD…IKKYQPYYNV (78 aa). A UVR domain is found at 197–232; it reads GAVKQDLTQKMEQASEQLEFERAAEIRDQLKYIEET.

Belongs to the UvrC family. Interacts with UvrB in an incision complex.

Its subcellular location is the cytoplasm. In terms of biological role, the UvrABC repair system catalyzes the recognition and processing of DNA lesions. UvrC both incises the 5' and 3' sides of the lesion. The N-terminal half is responsible for the 3' incision and the C-terminal half is responsible for the 5' incision. The protein is UvrABC system protein C of Lactobacillus helveticus (strain DPC 4571).